The primary structure comprises 448 residues: C4-dicarboxylate transport protein (448 aa).

The next 9 membrane-spanning stretches (helical) occupy residues serine 9 to proline 29, leucine 59 to methionine 79, valine 91 to isoleucine 111, alanine 159 to leucine 179, isoleucine 203 to isoleucine 223, leucine 237 to serine 257, glycine 312 to alanine 332, isoleucine 345 to glycine 365, and isoleucine 367 to isoleucine 387.

Belongs to the dicarboxylate/amino acid:cation symporter (DAACS) (TC 2.A.23) family.

The protein resides in the cell inner membrane. Functionally, responsible for the transport of dicarboxylates such as succinate, fumarate, and malate from the periplasm across the membrane. This is C4-dicarboxylate transport protein from Acinetobacter baylyi (strain ATCC 33305 / BD413 / ADP1).